The primary structure comprises 416 residues: Glutamate dehydrogenase A2 (416 aa).

Lys-105 is an active-site residue.

This sequence belongs to the Glu/Leu/Phe/Val dehydrogenases family. In terms of assembly, homohexamer.

This is Glutamate dehydrogenase A2 (gdhA2) from Halobacterium salinarum (strain ATCC 700922 / JCM 11081 / NRC-1) (Halobacterium halobium).